A 616-amino-acid chain; its full sequence is Sialic acid TRAP transporter permease protein SiaT (616 aa).

Residues 1 to 190 (MKYINKLEEW…RISNYIKLGS (190 aa)) are TRAP transporter small permease. A run of 17 helical transmembrane segments spans residues 9 to 29 (EWLG…QILS), 36 to 56 (PLIW…MLGI), 83 to 103 (TNTF…HFGI), 117 to 137 (GGIS…LMMF), 153 to 173 (YLPA…LFFA), 195 to 215 (IALL…WSLF), 244 to 264 (FPLL…TGGI), 288 to 308 (IGAS…AGGL), 332 to 352 (ASCI…YGVI), 357 to 377 (IAKL…ALMA), 407 to 427 (FWAI…LFSP), 431 to 451 (AIVA…ELTL), 459 to 479 (IEAM…TFFG), 505 to 525 (VLVM…ALAL), 527 to 547 (FLVL…LIFF), 552 to 572 (TLNM…FVVA), and 587 to 607 (LPFL…PQII). Positions 191–616 (SSVYIALLVW…ITFVPNLLIP (426 aa)) are TRAP transporter large permease.

In the N-terminal section; belongs to the TRAP transporter small permease family. The protein in the C-terminal section; belongs to the TRAP transporter large permease family. The complex comprises the extracytoplasmic solute receptor protein SiaP, and the fused transmembrane protein SiaT.

It is found in the cell inner membrane. Functionally, part of the tripartite ATP-independent periplasmic (TRAP) transport system SiaPT involved in the uptake of sialic acid. The polypeptide is Sialic acid TRAP transporter permease protein SiaT (siaT) (Haemophilus influenzae (strain 86-028NP)).